The following is a 299-amino-acid chain: uncharacterized protein (299 aa).

Positions 1–38 (MSLDSNSDTEFELVPKFQTQPTRGDAPKSPELEEVSTV) are disordered.

The protein belongs to the calycin superfamily. Fatty-acid binding protein (FABP) family.

This is an uncharacterized protein from Caenorhabditis elegans.